The primary structure comprises 191 residues: Prostaglandin-H2 D-isomerase (191 aa).

The N-terminal stretch at 1-24 (MGALCTLWLGLVLLGVLGALQTSA) is a signal peptide. Q25 bears the Pyrrolidone carboxylic acid mark. Residue N51 is glycosylated (N-linked (GlcNAc...) asparagine). The active-site Nucleophile is the C65. N78 is a glycosylation site (N-linked (GlcNAc...) asparagine). A disulfide bond links C89 and C186.

The protein belongs to the calycin superfamily. Lipocalin family. In terms of assembly, monomer. In terms of processing, N- and O-glycosylated. Both N-glycosylation recognition sites are almost quantitatively occupied by N-glycans of the biantennary complex type, with a considerable proportion of structures bearing a bisecting GlcNAc. N-glycan at Asn-78: dHex1Hex5HexNAc4. Agalacto structure as well as sialylated and nonsialylated oligosaccharides bearing alpha2-3- and/or alpha2-6-linked NeuNAc are present.

It localises to the rough endoplasmic reticulum. Its subcellular location is the nucleus membrane. The protein resides in the golgi apparatus. The protein localises to the cytoplasm. It is found in the perinuclear region. It localises to the secreted. It carries out the reaction prostaglandin H2 = prostaglandin D2. Catalyzes the conversion of PGH2 to PGD2, a prostaglandin involved in smooth muscle contraction/relaxation and a potent inhibitor of platelet aggregation. Involved in a variety of CNS functions, such as sedation, NREM sleep and PGE2-induced allodynia, and may have an anti-apoptotic role in oligodendrocytes. Binds small non-substrate lipophilic molecules, including biliverdin, bilirubin, retinal, retinoic acid and thyroid hormone, and may act as a scavenger for harmful hydrophobic molecules and as a secretory retinoid and thyroid hormone transporter. Possibly involved in development and maintenance of the blood-brain, blood-retina, blood-aqueous humor and blood-testis barrier. It is likely to play important roles in both maturation and maintenance of the central nervous system and male reproductive system. Involved in PLA2G3-dependent maturation of mast cells. PLA2G3 is secreted by immature mast cells and acts on nearby fibroblasts upstream to PTDGS to synthesize PGD2, which in turn promotes mast cell maturation and degranulation via PTGDR. The chain is Prostaglandin-H2 D-isomerase (PTGDS) from Canis lupus familiaris (Dog).